The sequence spans 492 residues: Pyrin and HIN domain-containing protein 1 (492 aa).

Residues 1 to 88 enclose the Pyrin domain; sequence MANNYKKIVL…AETLKREKLK (88 aa). Disordered stretches follow at residues 106–199 and 400–492; these read KTKQ…KPLA and KNTN…PAVP. Residues 142-159 are compositionally biased toward basic and acidic residues; the sequence is PSEEETGTKRSKMSKEQT. Positions 160 to 173 are enriched in polar residues; sequence RPSCSAGASTSTAM. Over residues 181 to 194 the composition is skewed to low complexity; the sequence is TSSSAPPNTSSTES. The 201-residue stretch at 199-399 folds into the HIN-200 domain; the sequence is ANRHATASKN…SEMHSFIQIQ (201 aa). Composition is skewed to polar residues over residues 416-432 and 460-492; these read QEQS…TTLP and GAQS…PAVP.

It belongs to the HIN-200 family. As to quaternary structure, interacts with MDM2. As to expression, expressed in spleen, lymph node and peripheral blood leukocytes, and at lower levels in thymus, bone marrow and fetal liver. Down-regulated in breast tumors.

It is found in the nucleus. The protein resides in the nucleoplasm. Its subcellular location is the nucleus speckle. Functionally, major mediator of the tumor suppressor activity of IFN in breast cancer cells. Promotes ubiquitination and subsequent degradation of MDM2, which leads to p53/TP53 stabilization. Promotes ubiquitination and subsequent degradation of HDAC1, which in turn enhances maspin expression, and impairs invasive activity of cancer cells. This Homo sapiens (Human) protein is Pyrin and HIN domain-containing protein 1 (PYHIN1).